The following is a 141-amino-acid chain: Hemoglobin subunit alpha (141 aa).

Residues 1–141 (VLSPADKTNV…VSTVLTSKYR (141 aa)) form the Globin domain. The residue at position 3 (Ser-3) is a Phosphoserine. At Lys-7 the chain carries N6-succinyllysine. A Phosphothreonine modification is found at Thr-8. Residue Lys-11 is modified to N6-succinyllysine. Lys-16 is modified (N6-acetyllysine; alternate). The residue at position 16 (Lys-16) is an N6-succinyllysine; alternate. A Phosphotyrosine modification is found at Tyr-24. Position 40 is an N6-succinyllysine (Lys-40). His-58 is a binding site for O2. Residue His-87 coordinates heme b. Position 102 is a phosphoserine (Ser-102). Thr-108 bears the Phosphothreonine mark. Phosphoserine is present on residues Ser-124 and Ser-131. A phosphothreonine mark is found at Thr-134 and Thr-137. Position 138 is a phosphoserine (Ser-138).

It belongs to the globin family. Heterotetramer of two alpha chains and two beta chains. As to expression, red blood cells.

Its function is as follows. Involved in oxygen transport from the lung to the various peripheral tissues. Functionally, hemopressin acts as an antagonist peptide of the cannabinoid receptor CNR1. Hemopressin-binding efficiently blocks cannabinoid receptor CNR1 and subsequent signaling. This is Hemoglobin subunit alpha (HBA) from Tursiops truncatus (Atlantic bottle-nosed dolphin).